Here is a 355-residue protein sequence, read N- to C-terminus: Tyrosine recombinase XerC (355 aa).

Positions 4 to 89 (TQFDGDIDSF…AVRGFFAWAY (86 aa)) constitute a Core-binding (CB) domain. Residues 137-181 (KDDGGAAAAPGSGKAAGKTADKSADTVNRSEAPARADKRDNARVT) are disordered. Residues 141-154 (GAAAAPGSGKAAGK) show a composition bias toward low complexity. The region spanning 158–349 (KSADTVNRSE…SIEQLKNRYG (192 aa)) is the Tyr recombinase domain. The span at 168-178 (APARADKRDNA) shows a compositional bias: basic and acidic residues. Residues R200, K224, H301, R304, and H327 contribute to the active site. The active-site O-(3'-phospho-DNA)-tyrosine intermediate is the Y336.

The protein belongs to the 'phage' integrase family. XerC subfamily. As to quaternary structure, forms a cyclic heterotetrameric complex composed of two molecules of XerC and two molecules of XerD.

The protein localises to the cytoplasm. Functionally, site-specific tyrosine recombinase, which acts by catalyzing the cutting and rejoining of the recombining DNA molecules. The XerC-XerD complex is essential to convert dimers of the bacterial chromosome into monomers to permit their segregation at cell division. It also contributes to the segregational stability of plasmids. The protein is Tyrosine recombinase XerC of Bifidobacterium longum (strain DJO10A).